The primary structure comprises 105 residues: Putative pterin-4-alpha-carbinolamine dehydratase (105 aa).

It belongs to the pterin-4-alpha-carbinolamine dehydratase family.

The enzyme catalyses (4aS,6R)-4a-hydroxy-L-erythro-5,6,7,8-tetrahydrobiopterin = (6R)-L-erythro-6,7-dihydrobiopterin + H2O. The protein is Putative pterin-4-alpha-carbinolamine dehydratase of Sinorhizobium fredii (strain NBRC 101917 / NGR234).